A 60-amino-acid polypeptide reads, in one-letter code: Putative mercuric resistance protein (60 aa).

This is Putative mercuric resistance protein from Pseudomonas aeruginosa.